The sequence spans 499 residues: Lysosomal Pro-X carboxypeptidase (499 aa).

Positions 1–21 (MGRCSLLLLLLLIAFLTPGAA) are cleaved as a signal peptide. A propeptide spanning residues 22–47 (NPVSPSLRAPSSLPWSTSFRSRPTIT) is cleaved from the precursor. Asparagine 103 carries an N-linked (GlcNAc...) asparagine glycan. Serine 181 acts as the Charge relay system in catalysis. The segment at 196–337 (HLVVGALASS…QNIFQALNVY (142 aa)) is SKS domain. Disulfide bonds link cysteine 217–cysteine 375, cysteine 235–cysteine 313, cysteine 266–cysteine 346, and cysteine 367–cysteine 397. Asparagine 234 is a glycosylation site (N-linked (GlcNAc...) asparagine). N-linked (GlcNAc...) asparagine glycans are attached at residues asparagine 339 and asparagine 348. N-linked (GlcNAc...) asparagine glycosylation is present at asparagine 418. Active-site charge relay system residues include aspartate 433 and histidine 458.

It belongs to the peptidase S28 family. As to quaternary structure, homodimer.

The protein resides in the lysosome. The catalysed reaction is Cleavage of a -Pro-|-Xaa bond to release a C-terminal amino acid.. Cleaves C-terminal amino acids linked to proline in peptides such as angiotensin II, III and des-Arg9-bradykinin. This cleavage occurs at acidic pH, but enzymatic activity is retained with some substrates at neutral pH. This is Lysosomal Pro-X carboxypeptidase (PRCP) from Bos taurus (Bovine).